A 217-amino-acid chain; its full sequence is tRNA (guanine-N(7)-)-methyltransferase (217 aa).

Residues E43, D68, N101, and N123 each contribute to the S-adenosyl-L-methionine site. K127 is a substrate binding site. Positions 129 to 134 (RHNKRR) are interaction with RNA. Substrate-binding positions include D159 and 196 to 199 (TEYE).

It belongs to the class I-like SAM-binding methyltransferase superfamily. TrmB family.

It catalyses the reaction guanosine(46) in tRNA + S-adenosyl-L-methionine = N(7)-methylguanosine(46) in tRNA + S-adenosyl-L-homocysteine. Its pathway is tRNA modification; N(7)-methylguanine-tRNA biosynthesis. Its function is as follows. Catalyzes the formation of N(7)-methylguanine at position 46 (m7G46) in tRNA. In Clostridium botulinum (strain 657 / Type Ba4), this protein is tRNA (guanine-N(7)-)-methyltransferase.